A 130-amino-acid polypeptide reads, in one-letter code: Protein ApaG (130 aa).

Positions S3–R127 constitute an ApaG domain.

This Brucella suis biovar 1 (strain 1330) protein is Protein ApaG.